A 717-amino-acid chain; its full sequence is Translation initiation factor eIF2B subunit epsilon (717 aa).

Residues 1–14 (MAATAAVPGAAAGR) are compositionally biased toward low complexity. The tract at residues 1 to 37 (MAATAAVPGAAAGRASKRGGGGSGGGGTQGAEEEPPP) is disordered. Residue Arg18 is modified to Omega-N-methylarginine. Positions 18–29 (RGGGGSGGGGTQ) are enriched in gly residues. Ser23 carries the post-translational modification Phosphoserine. Glycyl lysine isopeptide (Lys-Gly) (interchain with G-Cter in ubiquitin) cross-links involve residues Lys57 and Lys99. Phosphoserine is present on Ser126. Glycyl lysine isopeptide (Lys-Gly) (interchain with G-Cter in ubiquitin) cross-links involve residues Lys137 and Lys213. The residue at position 318 (Thr318) is a Phosphothreonine. The interval 442–479 (GSVISLHPPDAEEDEDDGQFSDDSGADQEKEKVKLKGY) is disordered. 3 positions are modified to phosphoserine: Ser446, Ser462, and Ser465. A compositionally biased stretch (acidic residues) spans 452–467 (AEEDEDDGQFSDDSGA). Lys501 is covalently cross-linked (Glycyl lysine isopeptide (Lys-Gly) (interchain with G-Cter in ubiquitin)). The tract at residues 517 to 538 (TEEESETESEGSVDPEELDSRA) is disordered. Residues 519-533 (EESETESEGSVDPEE) are compositionally biased toward acidic residues. 2 positions are modified to phosphoserine: Ser528 and Ser536. Residues 539 to 716 (GSPQLDDIRV…REAEEESSED (178 aa)) form the W2 domain. Ser540 carries the post-translational modification Phosphoserine; by DYRK2. A Phosphoserine modification is found at Ser713.

Belongs to the eIF-2B gamma/epsilon subunits family. As to quaternary structure, component of the translation initiation factor 2B (eIF2B) complex which is a heterodecamer of two sets of five different subunits: alpha, beta, gamma, delta and epsilon. Subunits alpha, beta and delta comprise a regulatory subcomplex and subunits epsilon and gamma comprise a catalytic subcomplex. Within the complex, the hexameric regulatory complex resides at the center, with the two heterodimeric catalytic subcomplexes bound on opposite sides. Phosphorylated at Ser-540 by DYRK2; this is required for subsequent phosphorylation by GSK3B. Phosphorylated on serine and threonine residues by GSK3B; phosphorylation inhibits its function. In terms of processing, polyubiquitinated, probably by NEDD4.

Its subcellular location is the cytoplasm. The protein resides in the cytosol. Activated by the chemical integrated stress response (ISR) inhibitor ISRIB which stimulates guanine nucleotide exchange factor activity for both phosphorylated and unphosphorylated eIF2. Its function is as follows. Acts as a component of the translation initiation factor 2B (eIF2B) complex, which catalyzes the exchange of GDP for GTP on eukaryotic initiation factor 2 (eIF2) gamma subunit. Its guanine nucleotide exchange factor activity is repressed when bound to eIF2 complex phosphorylated on the alpha subunit, thereby limiting the amount of methionyl-initiator methionine tRNA available to the ribosome and consequently global translation is repressed. The sequence is that of Translation initiation factor eIF2B subunit epsilon (Eif2b5) from Mus musculus (Mouse).